The chain runs to 309 residues: Putative pyridoxal kinase C6F6.11c (309 aa).

2 residues coordinate substrate: Ser-12 and Tyr-123. ATP-binding positions include 182 to 183 (SS) and 209 to 221 (LIPVIPGIFRGTG). Residue Asp-222 participates in substrate binding.

The protein belongs to the pyridoxine kinase family. Requires a divalent metal cation as cofactor.

Its subcellular location is the cytoplasm. It is found in the nucleus. It carries out the reaction pyridoxal + ATP = pyridoxal 5'-phosphate + ADP + H(+). Its function is as follows. Required for synthesis of pyridoxal-5-phosphate from vitamin B6. The polypeptide is Putative pyridoxal kinase C6F6.11c (Schizosaccharomyces pombe (strain 972 / ATCC 24843) (Fission yeast)).